Reading from the N-terminus, the 940-residue chain is Isoleucine--tRNA ligase (940 aa).

The 'HIGH' region signature appears at 58 to 68 (PYANGSIHIGH). Position 564 (E564) interacts with L-isoleucyl-5'-AMP. Residues 605–609 (KMSKS) carry the 'KMSKS' region motif. K608 lines the ATP pocket. 4 residues coordinate Zn(2+): C903, C906, C923, and C926.

Belongs to the class-I aminoacyl-tRNA synthetase family. IleS type 1 subfamily. Monomer. Zn(2+) serves as cofactor.

The protein localises to the cytoplasm. It carries out the reaction tRNA(Ile) + L-isoleucine + ATP = L-isoleucyl-tRNA(Ile) + AMP + diphosphate. Functionally, catalyzes the attachment of isoleucine to tRNA(Ile). As IleRS can inadvertently accommodate and process structurally similar amino acids such as valine, to avoid such errors it has two additional distinct tRNA(Ile)-dependent editing activities. One activity is designated as 'pretransfer' editing and involves the hydrolysis of activated Val-AMP. The other activity is designated 'posttransfer' editing and involves deacylation of mischarged Val-tRNA(Ile). This chain is Isoleucine--tRNA ligase, found in Shewanella sediminis (strain HAW-EB3).